Consider the following 783-residue polypeptide: RNA exonuclease 5 (783 aa).

An Exonuclease domain is found at 230–378 (LFGLDCEMCL…EDARTTLELA (149 aa)). RRM domains lie at 503-577 (STVY…RPVT) and 598-677 (GTIY…RHLH).

The sequence is that of RNA exonuclease 5 (REXO5) from Bos taurus (Bovine).